The sequence spans 609 residues: Dihydroxy-acid dehydratase 1 (609 aa).

Residue aspartate 81 participates in Mg(2+) binding. Cysteine 122 serves as a coordination point for [2Fe-2S] cluster. Aspartate 123 and lysine 124 together coordinate Mg(2+). Lysine 124 bears the N6-carboxylysine mark. Position 195 (cysteine 195) interacts with [2Fe-2S] cluster. A Mg(2+)-binding site is contributed by glutamate 491. The active-site Proton acceptor is serine 517.

The protein belongs to the IlvD/Edd family. As to quaternary structure, homodimer. Requires [2Fe-2S] cluster as cofactor. Mg(2+) is required as a cofactor.

It carries out the reaction (2R)-2,3-dihydroxy-3-methylbutanoate = 3-methyl-2-oxobutanoate + H2O. The catalysed reaction is (2R,3R)-2,3-dihydroxy-3-methylpentanoate = (S)-3-methyl-2-oxopentanoate + H2O. It participates in amino-acid biosynthesis; L-isoleucine biosynthesis; L-isoleucine from 2-oxobutanoate: step 3/4. The protein operates within amino-acid biosynthesis; L-valine biosynthesis; L-valine from pyruvate: step 3/4. In terms of biological role, functions in the biosynthesis of branched-chain amino acids. Catalyzes the dehydration of (2R,3R)-2,3-dihydroxy-3-methylpentanoate (2,3-dihydroxy-3-methylvalerate) into 2-oxo-3-methylpentanoate (2-oxo-3-methylvalerate) and of (2R)-2,3-dihydroxy-3-methylbutanoate (2,3-dihydroxyisovalerate) into 2-oxo-3-methylbutanoate (2-oxoisovalerate), the penultimate precursor to L-isoleucine and L-valine, respectively. The polypeptide is Dihydroxy-acid dehydratase 1 (Acinetobacter baylyi (strain ATCC 33305 / BD413 / ADP1)).